Here is a 237-residue protein sequence, read N- to C-terminus: Endoglucanase-1 (237 aa).

A signal peptide spans 1–16; the sequence is MKAFHLLAALAGAAVA. Gln-17 is modified (pyrrolidone carboxylic acid).

This sequence belongs to the glycosyl hydrolase 12 (cellulase H) family.

It is found in the secreted. It catalyses the reaction Endohydrolysis of (1-&gt;4)-beta-D-glucosidic linkages in cellulose, lichenin and cereal beta-D-glucans.. This Aspergillus aculeatus protein is Endoglucanase-1.